The following is a 394-amino-acid chain: Elongation factor Tu (394 aa).

In terms of domain architecture, tr-type G spans 10–204 (KPHVNIGTIG…AVDSYIPQPV (195 aa)). A G1 region spans residues 19 to 26 (GHVDHGKT). 19 to 26 (GHVDHGKT) contributes to the GTP binding site. Residue T26 participates in Mg(2+) binding. Residues 60–64 (GITIS) form a G2 region. The segment at 81-84 (DCPG) is G3. GTP contacts are provided by residues 81–85 (DCPGH) and 136–139 (NKID). Residues 136–139 (NKID) form a G4 region. The tract at residues 174–176 (SAL) is G5.

It belongs to the TRAFAC class translation factor GTPase superfamily. Classic translation factor GTPase family. EF-Tu/EF-1A subfamily. As to quaternary structure, monomer.

Its subcellular location is the cytoplasm. It carries out the reaction GTP + H2O = GDP + phosphate + H(+). Functionally, GTP hydrolase that promotes the GTP-dependent binding of aminoacyl-tRNA to the A-site of ribosomes during protein biosynthesis. In Rickettsia peacockii (strain Rustic), this protein is Elongation factor Tu.